We begin with the raw amino-acid sequence, 312 residues long: Methionyl-tRNA formyltransferase (312 aa).

109–112 (SLLP) lines the (6S)-5,6,7,8-tetrahydrofolate pocket.

The protein belongs to the Fmt family.

The enzyme catalyses L-methionyl-tRNA(fMet) + (6R)-10-formyltetrahydrofolate = N-formyl-L-methionyl-tRNA(fMet) + (6S)-5,6,7,8-tetrahydrofolate + H(+). Attaches a formyl group to the free amino group of methionyl-tRNA(fMet). The formyl group appears to play a dual role in the initiator identity of N-formylmethionyl-tRNA by promoting its recognition by IF2 and preventing the misappropriation of this tRNA by the elongation apparatus. The protein is Methionyl-tRNA formyltransferase of Anaeromyxobacter dehalogenans (strain 2CP-1 / ATCC BAA-258).